We begin with the raw amino-acid sequence, 582 residues long: Semenogelin-2 (582 aa).

Positions 1 to 23 are cleaved as a signal peptide; the sequence is MKSIILFVLSLLLILEKQAAVMG. Disordered regions lie at residues 26 to 65, 132 to 159, 272 to 295, 318 to 358, 379 to 417, and 439 to 582; these read CGSK…SFSI, GGQA…SSQY, NLNQ…RTEE, TEEK…ERHL, EEQI…EERR, and EEQI…PVST. Composition is skewed to polar residues over residues 31 to 40 and 137 to 159; these read QLPSGSSQFP and RGTQ…SSQY. The span at 325–335 shows a compositional bias: polar residues; that stretch reads KSQNQVTIHSQ. A compositionally biased stretch (basic and acidic residues) spans 336–345; sequence GQEHGHKENK. Composition is skewed to polar residues over residues 379–397, 439–457, 487–496, and 506–524; these read EEQI…SQAQ, KDVSQSSTSF, and SQIQ…QNAK. Basic and acidic residues-rich tracts occupy residues 525 to 552 and 559 to 582; these read GKSD…ESSE and TEHE…PVST.

It belongs to the semenogelin family. As to quaternary structure, interacts with SERPINA5.

It is found in the secreted. Participates in the formation of a gel matrix (sperm coagulum) entrapping the accessory gland secretions and ejaculated spermatozoa. The polypeptide is Semenogelin-2 (SEMG2) (Hylobates lar (Lar gibbon)).